The chain runs to 252 residues: 3-dehydroquinate dehydratase (252 aa).

Residues Ser21, 46 to 48 (EWR), and Arg82 each bind 3-dehydroquinate. The Proton donor/acceptor role is filled by His143. Residue Lys170 is the Schiff-base intermediate with substrate of the active site. 3-dehydroquinate-binding residues include Arg213, Ser232, and Gln236.

The protein belongs to the type-I 3-dehydroquinase family. As to quaternary structure, homodimer.

It carries out the reaction 3-dehydroquinate = 3-dehydroshikimate + H2O. It participates in metabolic intermediate biosynthesis; chorismate biosynthesis; chorismate from D-erythrose 4-phosphate and phosphoenolpyruvate: step 3/7. Its function is as follows. Involved in the third step of the chorismate pathway, which leads to the biosynthesis of aromatic amino acids. Catalyzes the cis-dehydration of 3-dehydroquinate (DHQ) and introduces the first double bond of the aromatic ring to yield 3-dehydroshikimate. This Shigella dysenteriae serotype 1 (strain Sd197) protein is 3-dehydroquinate dehydratase.